The primary structure comprises 380 residues: Cytochrome b (380 aa).

The next 4 helical transmembrane spans lie at 34 to 54, 78 to 99, 114 to 134, and 179 to 199; these read FGSLLAVCFMTQIITGLLLAM, WLIRNLHANGASFFFICIYLHI, WNTGVILLLTLMATAFVGYVL, and FFALHFLLPFVIAGITIIHLT. His-84 and His-98 together coordinate heme b. His-183 and His-197 together coordinate heme b. His-202 lines the a ubiquinone pocket. A run of 4 helical transmembrane segments spans residues 227-247, 289-309, 321-341, and 348-368; these read IKDILGLTLMLTPLLTLALFS, LGGVLALAASVLILLLIPFLH, FSQLLFWLLVANLLILTWVGS, and FIIIGQLASLSYFTTLLILFP.

This sequence belongs to the cytochrome b family. The cytochrome bc1 complex contains 11 subunits: 3 respiratory subunits (MT-CYB, CYC1 and UQCRFS1), 2 core proteins (UQCRC1 and UQCRC2) and 6 low-molecular weight proteins (UQCRH/QCR6, UQCRB/QCR7, UQCRQ/QCR8, UQCR10/QCR9, UQCR11/QCR10 and a cleavage product of UQCRFS1). This cytochrome bc1 complex then forms a dimer. Requires heme b as cofactor.

It localises to the mitochondrion inner membrane. In terms of biological role, component of the ubiquinol-cytochrome c reductase complex (complex III or cytochrome b-c1 complex) that is part of the mitochondrial respiratory chain. The b-c1 complex mediates electron transfer from ubiquinol to cytochrome c. Contributes to the generation of a proton gradient across the mitochondrial membrane that is then used for ATP synthesis. In Numida meleagris (Helmeted guineafowl), this protein is Cytochrome b (MT-CYB).